Consider the following 527-residue polypeptide: Cytokinin dehydrogenase 3 (527 aa).

A signal peptide spans 1 to 22; it reads MEVAMVCTRVNLLILILSLCSP. The 180-residue stretch at 52-231 folds into the FAD-binding PCMH-type domain; sequence LFHSPSAVLK…TRARILLQEA (180 aa). 3 residues coordinate FAD: A87, G89, and G91. Pros-8alpha-FAD histidine is present on H92. S93, Q97, D155, T160, S166, I170, and I221 together coordinate FAD. A glycan (N-linked (GlcNAc...) asparagine) is linked at N413. The FAD site is built by Y471 and Q509.

The protein belongs to the oxygen-dependent FAD-linked oxidoreductase family. As to quaternary structure, monomer. FAD is required as a cofactor. Expressed in inflorescence meristems. Highly expressed in lamina joints, and mainly in the parenchyma cells and vascular bundles on the abaxial side of the lamina joint. Expressed in roots, stems, leaves and young panicles.

The protein resides in the endoplasmic reticulum. The enzyme catalyses N(6)-dimethylallyladenine + A + H2O = 3-methyl-2-butenal + adenine + AH2. In terms of biological role, catalyzes the oxidation of cytokinins, a family of N(6)-substituted adenine derivatives, where the substituent is an isopentenyl group. Cytokinins are plant hormones essential for plant growth, development, and stress responses. Exhibits specific activities toward trans-zeatin (tZ) and isopentenyladenine (iP). Plays a role in lamina joint inclination. Regulates cell proliferation and vascular bundle number on the abaxial side of lamina joint. The protein is Cytokinin dehydrogenase 3 of Oryza sativa subsp. japonica (Rice).